Here is a 223-residue protein sequence, read N- to C-terminus: Probable transaldolase (223 aa).

The active-site Schiff-base intermediate with substrate is Lys92.

Belongs to the transaldolase family. Type 3B subfamily.

The protein localises to the cytoplasm. The catalysed reaction is D-sedoheptulose 7-phosphate + D-glyceraldehyde 3-phosphate = D-erythrose 4-phosphate + beta-D-fructose 6-phosphate. The protein operates within carbohydrate degradation; pentose phosphate pathway; D-glyceraldehyde 3-phosphate and beta-D-fructose 6-phosphate from D-ribose 5-phosphate and D-xylulose 5-phosphate (non-oxidative stage): step 2/3. Its function is as follows. Transaldolase is important for the balance of metabolites in the pentose-phosphate pathway. The polypeptide is Probable transaldolase (Thermus thermophilus (strain ATCC 27634 / DSM 579 / HB8)).